We begin with the raw amino-acid sequence, 372 residues long: 4-hydroxy-3-methylbut-2-en-1-yl diphosphate synthase (flavodoxin) (372 aa).

4 residues coordinate [4Fe-4S] cluster: Cys270, Cys273, Cys305, and Glu312.

It belongs to the IspG family. It depends on [4Fe-4S] cluster as a cofactor.

The enzyme catalyses (2E)-4-hydroxy-3-methylbut-2-enyl diphosphate + oxidized [flavodoxin] + H2O + 2 H(+) = 2-C-methyl-D-erythritol 2,4-cyclic diphosphate + reduced [flavodoxin]. Its pathway is isoprenoid biosynthesis; isopentenyl diphosphate biosynthesis via DXP pathway; isopentenyl diphosphate from 1-deoxy-D-xylulose 5-phosphate: step 5/6. Converts 2C-methyl-D-erythritol 2,4-cyclodiphosphate (ME-2,4cPP) into 1-hydroxy-2-methyl-2-(E)-butenyl 4-diphosphate. This Citrobacter koseri (strain ATCC BAA-895 / CDC 4225-83 / SGSC4696) protein is 4-hydroxy-3-methylbut-2-en-1-yl diphosphate synthase (flavodoxin).